Reading from the N-terminus, the 421-residue chain is 4-hydroxy-3-methylbut-2-en-1-yl diphosphate synthase (flavodoxin) (421 aa).

[4Fe-4S] cluster is bound by residues cysteine 300, cysteine 303, cysteine 346, and glutamate 353.

It belongs to the IspG family. Requires [4Fe-4S] cluster as cofactor.

The enzyme catalyses (2E)-4-hydroxy-3-methylbut-2-enyl diphosphate + oxidized [flavodoxin] + H2O + 2 H(+) = 2-C-methyl-D-erythritol 2,4-cyclic diphosphate + reduced [flavodoxin]. The protein operates within isoprenoid biosynthesis; isopentenyl diphosphate biosynthesis via DXP pathway; isopentenyl diphosphate from 1-deoxy-D-xylulose 5-phosphate: step 5/6. In terms of biological role, converts 2C-methyl-D-erythritol 2,4-cyclodiphosphate (ME-2,4cPP) into 1-hydroxy-2-methyl-2-(E)-butenyl 4-diphosphate. The sequence is that of 4-hydroxy-3-methylbut-2-en-1-yl diphosphate synthase (flavodoxin) from Laribacter hongkongensis (strain HLHK9).